Here is a 393-residue protein sequence, read N- to C-terminus: Inulin fructotransferase [DFA-I-forming] (393 aa).

It carries out the reaction Produces alpha-D-fructofuranose beta-D-fructofuranose 1,2':2,1'-dianhydride (DFA I) by successively eliminating the diminishing (2-&gt;1)-beta-D-fructan (inulin) chain from the terminal D-fructosyl-D-fructosyl disaccharide.. In Arthrobacter globiformis, this protein is Inulin fructotransferase [DFA-I-forming].